A 289-amino-acid polypeptide reads, in one-letter code: G1/S-specific cyclin-D2 (289 aa).

Positions 26–151 constitute a Cyclin N-terminal domain; sequence VLQNLLTIEE…VVLGKLKWNL (126 aa). Residues 264–289 are disordered; that stretch reads DQRDGSKSEDELDQASTPTDVRDIDL. Phosphoserine is present on Ser-271. At Thr-280 the chain carries Phosphothreonine.

Belongs to the cyclin family. Cyclin D subfamily. As to quaternary structure, interacts with either CDK4 or CDK6 protein kinase to form a serine/threonine kinase holoenzyme complex. The cyclin subunit imparts substrate specificity to the complex. Post-translationally, phosphorylation at Thr-280 by MAP kinases is required for ubiquitination and degradation by the DCX(AMBRA1) complex. Ubiquitinated by the DCX(AMBRA1) complex during the transition from G1 to S cell phase, leading to its degradation: ubiquitination is dependent on Thr-280 phosphorylation. The DCX(AMBRA1) complex represents the major regulator of CCND2 stability during the G1/S transition. Polyubiquitinated by the SCF(FBXL2) complex, leading to proteasomal degradation.

It is found in the nucleus. Its subcellular location is the cytoplasm. The protein resides in the nucleus membrane. In terms of biological role, regulatory component of the cyclin D2-CDK4 (DC) complex that phosphorylates and inhibits members of the retinoblastoma (RB) protein family including RB1 and regulates the cell-cycle during G(1)/S transition. Phosphorylation of RB1 allows dissociation of the transcription factor E2F from the RB/E2F complex and the subsequent transcription of E2F target genes which are responsible for the progression through the G(1) phase. Hypophosphorylates RB1 in early G(1) phase. Cyclin D-CDK4 complexes are major integrators of various mitogenenic and antimitogenic signals. The chain is G1/S-specific cyclin-D2 from Homo sapiens (Human).